Reading from the N-terminus, the 58-residue chain is Large ribosomal subunit protein uL30 (58 aa).

Belongs to the universal ribosomal protein uL30 family. Part of the 50S ribosomal subunit.

In Parabacteroides distasonis (strain ATCC 8503 / DSM 20701 / CIP 104284 / JCM 5825 / NCTC 11152), this protein is Large ribosomal subunit protein uL30.